A 325-amino-acid polypeptide reads, in one-letter code: MSETATWQPSASIPNLLKRAAIMAEIRRFFADRGVLEVETPCMSQATVTDIHLFPFETRFVGPGHSQGMNLYLMTSPEYHMKRLLAAGCGPVFQLCRSFRNEEMGRHHNPEFTMLEWYRPHYDMYRLMNEVDDLLQQVLDCQPAESLSYQQAFQRHLEIDPLSADKTQLREAAAKLDLSNIADTEEDRDTLLQLLFTMGVEPHIGKEKPTFIYHFPASQASLAQISTEDHRVAERFEVYYKGIELANGFHELTDAREQQQRFEQDNRKRAARGLPQQPIDQNLLDALAAGLPDCSGVALGVDRLVMLALGAESLADVIAFTVDRA.

S76–E78 is a binding site for substrate. ATP contacts are provided by residues R100 to E102 and N109. Y118 lines the substrate pocket. E244–L245 lines the ATP pocket. Substrate is bound at residue E251. An ATP-binding site is contributed by G300.

Belongs to the class-II aminoacyl-tRNA synthetase family. EpmA subfamily. As to quaternary structure, homodimer.

The enzyme catalyses D-beta-lysine + L-lysyl-[protein] + ATP = N(6)-((3R)-3,6-diaminohexanoyl)-L-lysyl-[protein] + AMP + diphosphate + H(+). Functionally, with EpmB is involved in the beta-lysylation step of the post-translational modification of translation elongation factor P (EF-P) on 'Lys-34'. Catalyzes the ATP-dependent activation of (R)-beta-lysine produced by EpmB, forming a lysyl-adenylate, from which the beta-lysyl moiety is then transferred to the epsilon-amino group of EF-P 'Lys-34'. The sequence is that of Elongation factor P--(R)-beta-lysine ligase from Salmonella choleraesuis (strain SC-B67).